A 436-amino-acid chain; its full sequence is Glutamate-1-semialdehyde 2,1-aminomutase (436 aa).

Lysine 270 carries the N6-(pyridoxal phosphate)lysine modification.

Belongs to the class-III pyridoxal-phosphate-dependent aminotransferase family. HemL subfamily. In terms of assembly, homodimer. It depends on pyridoxal 5'-phosphate as a cofactor.

It localises to the cytoplasm. The enzyme catalyses (S)-4-amino-5-oxopentanoate = 5-aminolevulinate. It functions in the pathway porphyrin-containing compound metabolism; protoporphyrin-IX biosynthesis; 5-aminolevulinate from L-glutamyl-tRNA(Glu): step 2/2. The polypeptide is Glutamate-1-semialdehyde 2,1-aminomutase (Cutibacterium acnes (strain DSM 16379 / KPA171202) (Propionibacterium acnes)).